The sequence spans 335 residues: MAQTKPIAEQMAALNNSDDTSFAADRSNSLLNATCPARIQNSVDQRKINRSFNDSLSSGYSGKWLRPKREALKITPLAQIDEAPATKRHSSAKDKHTEYKTRLCDAFRREGYCPYNDNCTYAHGQDELRVPRRRQEYYSRDPPRERRDSRSRRDDVDTTINRSSSSASKHHDENRRPSNNHGSSNRRQICHNFERGNCRYGPRCRFIHVEQMQHFNANATVYAPPSSDCPPPIAYYHHHPQHQQQFLPFPMPYFLAPPPQAQQGAPFPVQYIPQQHDLMNSQPMYAPMAPTYYYQPINSNGMPMMDVTIDPNATGGAFEVFPDGFFSQPPPTIIS.

Lys68 is covalently cross-linked (Glycyl lysine isopeptide (Lys-Gly) (interchain with G-Cter in SUMO)). The segment at 98–126 (EYKTRLCDAFRREGYCPYNDNCTYAHGQD) adopts a C3H1-type 1 zinc-finger fold. Residues 130–156 (VPRRRQEYYSRDPPRERRDSRSRRDDV) are compositionally biased toward basic and acidic residues. Positions 130 to 188 (VPRRRQEYYSRDPPRERRDSRSRRDDVDTTINRSSSSASKHHDENRRPSNNHGSSNRRQ) are disordered. 2 stretches are compositionally biased toward polar residues: residues 158–167 (TTINRSSSSA) and 177–187 (PSNNHGSSNRR). Residues 184–211 (SNRRQICHNFERGNCRYGPRCRFIHVEQ) form a C3H1-type 2 zinc finger. The segment at 288 to 291 (MAPT) is required for inhibition of Ser-2 phosphorylation.

In terms of assembly, interacts with hda-1, let-418 and mep-1. Interacts (via C terminus) with cit-1.1 (via C terminus). Post-translationally, sumoylated in adult germ cells.

The protein localises to the nucleus. It localises to the cytoplasm. Its subcellular location is the cytoskeleton. The protein resides in the microtubule organizing center. It is found in the centrosome. The protein localises to the spindle. It localises to the cytoplasmic granule. Maternally provided pie-1 is required for germline cell fate determination. Functions as a repressor of RNA polymerase II-dependent gene expression in the developing germline. Required for expression of nos-2 in P4 germline blastomere cells. Inhibits the histone deacetylase activity of hda-1. Represses transcriptional activation of cdk-9 and cit-1.1, which are members of the P-TEFb complex. Acts redundantly with gei-17 to promote piRNA-mediated silencing and fertility in adult germline. Promotes the sumoylation of hda-1 in adult animals but not in embryos thereby regulating its interaction with mep-1. The protein is Pharynx and intestine in excess protein 1 of Caenorhabditis elegans.